A 251-amino-acid polypeptide reads, in one-letter code: Imidazole glycerol phosphate synthase subunit HisF (251 aa).

Active-site residues include Asp-11 and Asp-130.

It belongs to the HisA/HisF family. In terms of assembly, heterodimer of HisH and HisF.

The protein localises to the cytoplasm. It catalyses the reaction 5-[(5-phospho-1-deoxy-D-ribulos-1-ylimino)methylamino]-1-(5-phospho-beta-D-ribosyl)imidazole-4-carboxamide + L-glutamine = D-erythro-1-(imidazol-4-yl)glycerol 3-phosphate + 5-amino-1-(5-phospho-beta-D-ribosyl)imidazole-4-carboxamide + L-glutamate + H(+). Its pathway is amino-acid biosynthesis; L-histidine biosynthesis; L-histidine from 5-phospho-alpha-D-ribose 1-diphosphate: step 5/9. Its function is as follows. IGPS catalyzes the conversion of PRFAR and glutamine to IGP, AICAR and glutamate. The HisF subunit catalyzes the cyclization activity that produces IGP and AICAR from PRFAR using the ammonia provided by the HisH subunit. This is Imidazole glycerol phosphate synthase subunit HisF from Flavobacterium johnsoniae (strain ATCC 17061 / DSM 2064 / JCM 8514 / BCRC 14874 / CCUG 350202 / NBRC 14942 / NCIMB 11054 / UW101) (Cytophaga johnsonae).